We begin with the raw amino-acid sequence, 355 residues long: Protein RecA (355 aa).

65-72 (GPESSGKT) provides a ligand contact to ATP. The disordered stretch occupies residues 333–355 (IEEKDEKQAEAEKNENTNLFDEE). Basic and acidic residues predominate over residues 336 to 347 (KDEKQAEAEKNE).

Belongs to the RecA family.

It is found in the cytoplasm. Can catalyze the hydrolysis of ATP in the presence of single-stranded DNA, the ATP-dependent uptake of single-stranded DNA by duplex DNA, and the ATP-dependent hybridization of homologous single-stranded DNAs. It interacts with LexA causing its activation and leading to its autocatalytic cleavage. This chain is Protein RecA, found in Staphylococcus carnosus (strain TM300).